A 409-amino-acid chain; its full sequence is Bone morphogenetic protein 4 (409 aa).

The signal sequence occupies residues 1–19; that stretch reads MIPGNRMLMVVLLCQVLLG. The propeptide occupies 20-293; it reads GASHASLIPE…ALTRRRRAKR (274 aa). Residue serine 91 is modified to Phosphoserine. Asparagine 144 and asparagine 209 each carry an N-linked (GlcNAc...) asparagine glycan. The interval 284-308 is disordered; it reads ALTRRRRAKRSPKHHPQRARKKNKN. 3 cysteine pairs are disulfide-bonded: cysteine 309/cysteine 374, cysteine 338/cysteine 406, and cysteine 342/cysteine 408. 2 N-linked (GlcNAc...) asparagine glycosylation sites follow: asparagine 351 and asparagine 366.

It belongs to the TGF-beta family. In terms of assembly, homodimer; disulfide-linked. Interacts with GREM2. Part of a complex consisting of TWSG1 and CHRD. Interacts with the serine proteases, HTRA1 and HTRA3; the interaction with either inhibits BMP4-mediated signaling. The HTRA protease activity is required for this inhibition. Interacts with SOSTDC1. Interacts with FBN1 (via N-terminal domain) and FBN2. Interacts with type I receptor BMPR1A. Interacts with type II receptor BMPR2. Interacts with FSTL1; this interaction inhibits the activation of the BMP4/Smad1/5/8 signaling pathway. Interacts with TGFBR3.

The protein localises to the secreted. Its subcellular location is the extracellular space. The protein resides in the extracellular matrix. Growth factor of the TGF-beta superfamily that plays essential roles in many developmental processes, including neurogenesis, vascular development, angiogenesis and osteogenesis. Acts in concert with PTHLH/PTHRP to stimulate ductal outgrowth during embryonic mammary development and to inhibit hair follicle induction. Initiates the canonical BMP signaling cascade by associating with type I receptor BMPR1A and type II receptor BMPR2. Once all three components are bound together in a complex at the cell surface, BMPR2 phosphorylates and activates BMPR1A. In turn, BMPR1A propagates signal by phosphorylating SMAD1/5/8 that travel to the nucleus and act as activators and repressors of transcription of target genes. Positively regulates the expression of odontogenic development regulator MSX1 via inducing the IPO7-mediated import of SMAD1 to the nucleus. Required for MSX1-mediated mesenchymal molar tooth bud development beyond the bud stage, via promoting Wnt signaling. Acts as a positive regulator of odontoblast differentiation during mesenchymal tooth germ formation, expression is repressed during the bell stage by MSX1-mediated inhibition of CTNNB1 signaling. Able to induce its own expression in dental mesenchymal cells and also in the neighboring dental epithelial cells via an MSX1-mediated pathway. Can also signal through non-canonical BMP pathways such as ERK/MAP kinase, PI3K/Akt, or SRC cascades. For example, induces SRC phosphorylation which, in turn, activates VEGFR2, leading to an angiogenic response. The sequence is that of Bone morphogenetic protein 4 from Suncus murinus (Asian house shrew).